Here is a 31-residue protein sequence, read N- to C-terminus: Bacteriocin lactocin-705 (31 aa).

Functionally, antibacterial activity against several lactic acid bacteria, Listeria, Streptococci, etc. This is Bacteriocin lactocin-705 from Lacticaseibacillus paracasei (Lactobacillus paracasei).